An 872-amino-acid chain; its full sequence is Alanine--tRNA ligase (872 aa).

Zn(2+) contacts are provided by His-567, His-571, Cys-669, and His-673.

It belongs to the class-II aminoacyl-tRNA synthetase family. The cofactor is Zn(2+).

It localises to the cytoplasm. The catalysed reaction is tRNA(Ala) + L-alanine + ATP = L-alanyl-tRNA(Ala) + AMP + diphosphate. Catalyzes the attachment of alanine to tRNA(Ala) in a two-step reaction: alanine is first activated by ATP to form Ala-AMP and then transferred to the acceptor end of tRNA(Ala). Also edits incorrectly charged Ser-tRNA(Ala) and Gly-tRNA(Ala) via its editing domain. In Streptococcus pyogenes serotype M18 (strain MGAS8232), this protein is Alanine--tRNA ligase.